We begin with the raw amino-acid sequence, 438 residues long: MKLWGGRFRKAENQLMEEFNKSFGYDCVLYKKDIEGSVAHVHMQVKCGLLTEEEGKSITEGLKGILEDVENGKLVLDGEYEDIHSFTEINLIQRIGDVGKKLHTARSRNDQVAVDMRLYAKEKANDLVGLISEFKATIKDVADKNPVMMPGYTHLQRAQVVTFKHHLMAYYSMFDRDEKRIKNAIEILDESPLGCGALAGTTHDIDRSITCEQLGFKKVVDNFMDGVSDRDYLLELMSDFSIIMMHLSRLSEELILWSSQEFGFVEIDDLYTTGSSIMPQKKNPDGAELIRGKTGRVYGNLFGLFTVMKGIPLAYNKDMQEDKEGFFDSVHTLEMCIQIMDRMIATLKVNEDKMKQAVKNGFLNATEVADYLVKNNVAFRDAHGIVGSIVIYCEDNKKAIEDLTLEELHKFSDAFKEDIYDFIDYESILNKGIKKNLK.

It belongs to the lyase 1 family. Argininosuccinate lyase subfamily.

Its subcellular location is the cytoplasm. It carries out the reaction 2-(N(omega)-L-arginino)succinate = fumarate + L-arginine. It functions in the pathway amino-acid biosynthesis; L-arginine biosynthesis; L-arginine from L-ornithine and carbamoyl phosphate: step 3/3. The polypeptide is Argininosuccinate lyase (Clostridioides difficile (strain 630) (Peptoclostridium difficile)).